A 753-amino-acid polypeptide reads, in one-letter code: Cell cycle progression protein 1 (753 aa).

The Cytoplasmic segment spans residues methionine 1–lysine 218. Positions methionine 1 to glutamine 307 are interaction with MCF2L and SRC. A disordered region spans residues histidine 57–histidine 211. Polar residues-rich tracts occupy residues serine 62 to methionine 78 and glutamine 122 to glycine 138. Residues proline 176–threonine 185 are compositionally biased toward basic residues. Serine 187 is modified (phosphoserine). Residues glutamate 190–aspartate 201 are compositionally biased toward acidic residues. A helical; Signal-anchor for type II membrane protein membrane pass occupies residues cysteine 219–isoleucine 239. Residues glutamine 240–phenylalanine 753 are Lumenal-facing. Residues glutamine 298–arginine 449 are a coiled coil. Basic and acidic residues predominate over residues glutamine 457–lysine 467. A disordered region spans residues glutamine 457–phenylalanine 484. Residues arginine 468–serine 478 show a composition bias toward basic residues. A coiled-coil region spans residues valine 503–lysine 529. Basic and acidic residues predominate over residues alanine 553–arginine 563. The tract at residues alanine 553–asparagine 606 is disordered. The span at glutamine 573 to arginine 584 shows a compositional bias: polar residues. A compositionally biased stretch (basic and acidic residues) spans aspartate 591–lysine 605.

Belongs to the CCPG1 family. As to quaternary structure, interacts with MCF2L. May interact with MCF2, ARHGEF1, BCR, VAV1 and FGD1, but not with TIAM1. Interacts with GTP-bound CDC42 and SRC.

The protein localises to the cytoplasmic granule membrane. Acts as an assembly platform for Rho protein signaling complexes. Limits guanine nucleotide exchange activity of MCF2L toward RHOA, which results in an inhibition of both its transcriptional activation ability and its transforming activity. Does not inhibit activity of MCF2L toward CDC42, or activity of MCF2 toward either RHOA or CDC42. May be involved in cell cycle regulation. This Mus musculus (Mouse) protein is Cell cycle progression protein 1 (Ccpg1).